Reading from the N-terminus, the 957-residue chain is Glycine dehydrogenase (decarboxylating) (957 aa).

The residue at position 708 (Lys-708) is an N6-(pyridoxal phosphate)lysine.

The protein belongs to the GcvP family. In terms of assembly, the glycine cleavage system is composed of four proteins: P, T, L and H. The cofactor is pyridoxal 5'-phosphate.

It carries out the reaction N(6)-[(R)-lipoyl]-L-lysyl-[glycine-cleavage complex H protein] + glycine + H(+) = N(6)-[(R)-S(8)-aminomethyldihydrolipoyl]-L-lysyl-[glycine-cleavage complex H protein] + CO2. Its function is as follows. The glycine cleavage system catalyzes the degradation of glycine. The P protein binds the alpha-amino group of glycine through its pyridoxal phosphate cofactor; CO(2) is released and the remaining methylamine moiety is then transferred to the lipoamide cofactor of the H protein. This Escherichia coli O81 (strain ED1a) protein is Glycine dehydrogenase (decarboxylating).